The sequence spans 68 residues: Large ribosomal subunit protein uL29c (68 aa).

The protein belongs to the universal ribosomal protein uL29 family.

It is found in the plastid. The protein resides in the chloroplast. The sequence is that of Large ribosomal subunit protein uL29c from Pyropia yezoensis (Susabi-nori).